The sequence spans 350 residues: Biotin synthase (350 aa).

Positions 38 to 256 (NHVQVSTLLS…IAVARIMMPE (219 aa)) constitute a Radical SAM core domain. Residues cysteine 53, cysteine 57, and cysteine 60 each contribute to the [4Fe-4S] cluster site. 4 residues coordinate [2Fe-2S] cluster: cysteine 97, cysteine 128, cysteine 188, and arginine 260.

The protein belongs to the radical SAM superfamily. Biotin synthase family. As to quaternary structure, homodimer. [4Fe-4S] cluster is required as a cofactor. It depends on [2Fe-2S] cluster as a cofactor.

The catalysed reaction is (4R,5S)-dethiobiotin + (sulfur carrier)-SH + 2 reduced [2Fe-2S]-[ferredoxin] + 2 S-adenosyl-L-methionine = (sulfur carrier)-H + biotin + 2 5'-deoxyadenosine + 2 L-methionine + 2 oxidized [2Fe-2S]-[ferredoxin]. Its pathway is cofactor biosynthesis; biotin biosynthesis; biotin from 7,8-diaminononanoate: step 2/2. In terms of biological role, catalyzes the conversion of dethiobiotin (DTB) to biotin by the insertion of a sulfur atom into dethiobiotin via a radical-based mechanism. The chain is Biotin synthase from Aliivibrio fischeri (strain ATCC 700601 / ES114) (Vibrio fischeri).